Here is an 843-residue protein sequence, read N- to C-terminus: MGFLSKILDGNNKEIKQLGKLADKVIALEEKTAILTDEEIRNKTKQFQTELADIDNVKKQNDYLDKILPEAYALVREGSKRVFNMTPYKVQIMGGIAIHKGDIAEMRTGEGKTLTATMPTYLNALAGRGVHVITVNEYLSSVQSEEMAELYNFLGLTVGLNLNSKTTEEKREAYAQDITYSTNNELGFDYLRDNMVNYSEDRVMRPLHFAIIDEVDSILIDEARTPLIISGEAEKSTSLYTQANVFAKMLKQDEDYKYDEKTKAVHLTEQGADKAERMFKVENLYDVQNVDVISHINTALRAHVTLQRDVDYMVVDGEVLIVDQFTGRTMPGRRFSEGLHQAIEAKEGVQIQNESKTMASITFQNYFRMYNKLAGMTGTAKTEEEEFRNIYNMTVTQIPTNKPVQRNDKSDLIYISQKGKFDAVVEDVVEKHKAGQPVLLGTVAVETSEYISNLLKKRGIRHDVLNAKNHEREAEIVAGAGQKGAVTIATNMAGRGTDIKLGEGVEELGGLAVIGTERHESRRIDDQLRGRSGRQGDKGDSRFYLSLQDELMIRFGSERLQKMMSRLGLDDSTPIESKMVSRAVESAQKRVEGNNFDARKRILEYDEVLRKQREIIYNERNSIIDEEDSSQVVDAMLRSTLQRSINYYINTADDEPEYQPFIDYINDIFLQEGDITEDDIKGKDAEDIFEVVWAKIEAAYQSQKDILEEQMNEFERMILLRSIDSHWTDHIDTMDQLRQGIHLRSYAQQNPLRDYQNEGHELFDIMMQNIEEDTCKFILKSVVQVEDNIEREKTTEFGEAKHVSAEDGKEKVKPKPIVKGDQVGRNDDCPCGSGKKFKNCHGK.

ATP is bound by residues Gln91, 109–113 (GEGKT), and Asp498. Over residues 799 to 813 (EAKHVSAEDGKEKVK) the composition is skewed to basic and acidic residues. The tract at residues 799–826 (EAKHVSAEDGKEKVKPKPIVKGDQVGRN) is disordered. Zn(2+) is bound by residues Cys829, Cys831, Cys840, and His841.

The protein belongs to the SecA family. As to quaternary structure, monomer and homodimer. Part of the essential Sec protein translocation apparatus which comprises SecA, SecYEG and auxiliary proteins SecDF. Other proteins may also be involved. The cofactor is Zn(2+).

It localises to the cell membrane. The protein localises to the cytoplasm. It catalyses the reaction ATP + H2O + cellular proteinSide 1 = ADP + phosphate + cellular proteinSide 2.. Functionally, part of the Sec protein translocase complex. Interacts with the SecYEG preprotein conducting channel. Has a central role in coupling the hydrolysis of ATP to the transfer of proteins into and across the cell membrane, serving as an ATP-driven molecular motor driving the stepwise translocation of polypeptide chains across the membrane. This chain is Protein translocase subunit SecA 1, found in Staphylococcus aureus (strain N315).